The primary structure comprises 63 residues: Sperm protamine P1 (63 aa).

The disordered stretch occupies residues 1–63 (MARYRRHSRS…RYSRRGRRRY (63 aa)).

The protein belongs to the protamine P1 family. As to expression, testis.

The protein localises to the nucleus. It localises to the chromosome. Functionally, protamines substitute for histones in the chromatin of sperm during the haploid phase of spermatogenesis. They compact sperm DNA into a highly condensed, stable and inactive complex. The sequence is that of Sperm protamine P1 (PRM1) from Sminthopsis griseoventer (Gray-bellied dunnart).